Consider the following 479-residue polypeptide: MSFTLAIVGRPNVGKSTLFNRLVGRKLALVDDQPGVTRDLREGAARLADLRFTVIDTAGLEDANDDSLEGRMRRLTERAVSMADATLFVMDARAGVTTNDLVFADILRKSGRPVVLAANKAEGNAGQSGLLDAYSLGLGEPLALSAEHGEGMADLVQVLRPMIEAAASAEEAETDVDVEGEDRVITHSKPLQIAVVGRPNAGKSTLINQIIGEDRLLTGPEAGITRDAIGLTFEWDDVPMRIFDTAGMRKRAKVQEKLEKLSVSDGLRAVKFAEVVVVLLDAAIPFESQDLRIADLAEREGRAVVIAVNKWDVEPEKQQKLKDLRVGLERLLPQLRGAPLVTVSAKTGKGLDKLHAAIMKIHATWNTRISTARLNQWLAAMIEAHPPPAPGGRRIKLRYMTQAKTRPPGFVVMCSHPQNLPEAYSRYLVNGLRQDFDMPGTPIRLWMRSQADDNPYKNRKKSTPSRLNKHVRKGETKKG.

EngA-type G domains follow at residues 3–167 and 191–366; these read FTLA…EAAA and LQIA…ATWN. GTP-binding positions include 9–16, 56–60, 119–122, 197–204, 244–248, and 309–312; these read GRPNVGKS, DTAGL, NKAE, GRPNAGKS, DTAGM, and NKWD. In terms of domain architecture, KH-like spans 367 to 453; sequence TRISTARLNQ…RLWMRSQADD (87 aa). Residues 449-479 are disordered; that stretch reads SQADDNPYKNRKKSTPSRLNKHVRKGETKKG. Over residues 457-472 the composition is skewed to basic residues; it reads KNRKKSTPSRLNKHVR.

It belongs to the TRAFAC class TrmE-Era-EngA-EngB-Septin-like GTPase superfamily. EngA (Der) GTPase family. In terms of assembly, associates with the 50S ribosomal subunit.

Functionally, GTPase that plays an essential role in the late steps of ribosome biogenesis. This is GTPase Der from Jannaschia sp. (strain CCS1).